The chain runs to 454 residues: Bifunctional protein GlmU (454 aa).

The pyrophosphorylase stretch occupies residues methionine 1–arginine 226. UDP-N-acetyl-alpha-D-glucosamine is bound by residues leucine 8–glycine 11, lysine 22, glutamine 73, glycine 78–threonine 79, tyrosine 100–aspartate 102, glycine 137, glutamate 151, asparagine 166, and asparagine 224. Aspartate 102 serves as a coordination point for Mg(2+). Asparagine 224 lines the Mg(2+) pocket. Residues valine 227 to alanine 247 are linker. An N-acetyltransferase region spans residues glycine 248–lysine 454. The UDP-N-acetyl-alpha-D-glucosamine site is built by arginine 330 and lysine 348. The active-site Proton acceptor is the histidine 360. Positions 363 and 374 each coordinate UDP-N-acetyl-alpha-D-glucosamine. Acetyl-CoA contacts are provided by residues alanine 377, asparagine 383–tyrosine 384, serine 402, alanine 420, and arginine 437.

The protein in the N-terminal section; belongs to the N-acetylglucosamine-1-phosphate uridyltransferase family. It in the C-terminal section; belongs to the transferase hexapeptide repeat family. Homotrimer. Mg(2+) serves as cofactor.

It localises to the cytoplasm. The catalysed reaction is alpha-D-glucosamine 1-phosphate + acetyl-CoA = N-acetyl-alpha-D-glucosamine 1-phosphate + CoA + H(+). The enzyme catalyses N-acetyl-alpha-D-glucosamine 1-phosphate + UTP + H(+) = UDP-N-acetyl-alpha-D-glucosamine + diphosphate. Its pathway is nucleotide-sugar biosynthesis; UDP-N-acetyl-alpha-D-glucosamine biosynthesis; N-acetyl-alpha-D-glucosamine 1-phosphate from alpha-D-glucosamine 6-phosphate (route II): step 2/2. It functions in the pathway nucleotide-sugar biosynthesis; UDP-N-acetyl-alpha-D-glucosamine biosynthesis; UDP-N-acetyl-alpha-D-glucosamine from N-acetyl-alpha-D-glucosamine 1-phosphate: step 1/1. It participates in bacterial outer membrane biogenesis; LPS lipid A biosynthesis. Functionally, catalyzes the last two sequential reactions in the de novo biosynthetic pathway for UDP-N-acetylglucosamine (UDP-GlcNAc). The C-terminal domain catalyzes the transfer of acetyl group from acetyl coenzyme A to glucosamine-1-phosphate (GlcN-1-P) to produce N-acetylglucosamine-1-phosphate (GlcNAc-1-P), which is converted into UDP-GlcNAc by the transfer of uridine 5-monophosphate (from uridine 5-triphosphate), a reaction catalyzed by the N-terminal domain. This is Bifunctional protein GlmU from Shewanella oneidensis (strain ATCC 700550 / JCM 31522 / CIP 106686 / LMG 19005 / NCIMB 14063 / MR-1).